The primary structure comprises 330 residues: MENLEAKILEADSLEVLEKVRIELFGKKGLLAAQFAKMKDIPGPEKKAFAEGLNKQKTALQEAFDARYEVLKAEEIEKMLKSEAIDISLYGAVAEKGALHPVMETMDKIIDYFVALNFAVETGPMVEDDFHNFEALNLPKYHPARDMQDTFYFKDSGLLRTHTSPVQIRTMLETKPPIRMIAPGSVFRRDYDLTHTPMFHQVEGLVVDEKGKVSFANLKAILTDFLQYMFGDVEVRFRPSFFPFTEPSAEVDISCIFCEGKGCRVCSHTGWLEVLGCGIVDPNVFKAVGYEDVSGYAFGLGVERFAMLMHKIPDLRSLFEGDIRLLEQFR.

Mg(2+) is bound at residue Glu-246.

It belongs to the class-II aminoacyl-tRNA synthetase family. Phe-tRNA synthetase alpha subunit type 1 subfamily. Tetramer of two alpha and two beta subunits. Mg(2+) serves as cofactor.

It localises to the cytoplasm. It catalyses the reaction tRNA(Phe) + L-phenylalanine + ATP = L-phenylalanyl-tRNA(Phe) + AMP + diphosphate + H(+). The protein is Phenylalanine--tRNA ligase alpha subunit of Sulfurovum sp. (strain NBC37-1).